The chain runs to 1099 residues: Carbamoyl phosphate synthase large chain (1099 aa).

The tract at residues Met-1 to Glu-402 is carboxyphosphate synthetic domain. ATP-binding residues include Arg-129, Arg-169, Gly-175, Gly-176, Glu-208, Val-210, Glu-215, Gly-241, Ile-242, His-243, Gln-285, and Glu-299. Residues Lys-133 to Val-328 form the ATP-grasp 1 domain. Mg(2+) is bound by residues Gln-285, Glu-299, and Asn-301. Gln-285, Glu-299, and Asn-301 together coordinate Mn(2+). Residues Leu-403–Ala-541 form an oligomerization domain region. A carbamoyl phosphate synthetic domain region spans residues Val-542–Gly-944. An ATP-grasp 2 domain is found at Ala-666–Val-857. ATP contacts are provided by Arg-702, Lys-741, Leu-743, Glu-748, Gly-773, Val-774, His-775, Ser-776, Gln-816, and Glu-828. Residues Gln-816, Glu-828, and Asn-830 each coordinate Mg(2+). 3 residues coordinate Mn(2+): Gln-816, Glu-828, and Asn-830. Positions Asn-945–Met-1099 constitute an MGS-like domain. Residues Asn-945–Met-1099 form an allosteric domain region.

This sequence belongs to the CarB family. In terms of assembly, composed of two chains; the small (or glutamine) chain promotes the hydrolysis of glutamine to ammonia, which is used by the large (or ammonia) chain to synthesize carbamoyl phosphate. Tetramer of heterodimers (alpha,beta)4. Requires Mg(2+) as cofactor. Mn(2+) is required as a cofactor.

The catalysed reaction is hydrogencarbonate + L-glutamine + 2 ATP + H2O = carbamoyl phosphate + L-glutamate + 2 ADP + phosphate + 2 H(+). The enzyme catalyses hydrogencarbonate + NH4(+) + 2 ATP = carbamoyl phosphate + 2 ADP + phosphate + 2 H(+). It functions in the pathway amino-acid biosynthesis; L-arginine biosynthesis; carbamoyl phosphate from bicarbonate: step 1/1. The protein operates within pyrimidine metabolism; UMP biosynthesis via de novo pathway; (S)-dihydroorotate from bicarbonate: step 1/3. In terms of biological role, large subunit of the glutamine-dependent carbamoyl phosphate synthetase (CPSase). CPSase catalyzes the formation of carbamoyl phosphate from the ammonia moiety of glutamine, carbonate, and phosphate donated by ATP, constituting the first step of 2 biosynthetic pathways, one leading to arginine and/or urea and the other to pyrimidine nucleotides. The large subunit (synthetase) binds the substrates ammonia (free or transferred from glutamine from the small subunit), hydrogencarbonate and ATP and carries out an ATP-coupled ligase reaction, activating hydrogencarbonate by forming carboxy phosphate which reacts with ammonia to form carbamoyl phosphate. The polypeptide is Carbamoyl phosphate synthase large chain (Thermotoga sp. (strain RQ2)).